We begin with the raw amino-acid sequence, 137 residues long: 5-hydroxytryptamine receptor 4 (137 aa).

Residues T12–I35 form a helical membrane-spanning segment. A glycan (N-linked (GlcNAc...) asparagine) is linked at N58. Residues N67–Y90 form a helical membrane-spanning segment. The segment at A112–K137 is disordered.

It belongs to the G-protein coupled receptor 1 family. As to quaternary structure, interacts (via C-terminus 330-346 AA) with GRK5; this interaction is promoted by 5-HT (serotonin).

It is found in the cell membrane. Its subcellular location is the endosome membrane. Functionally, G-protein coupled receptor for 5-hydroxytryptamine (serotonin), a biogenic hormone that functions as a neurotransmitter, a hormone and a mitogen. Ligand binding causes a conformation change that triggers signaling via guanine nucleotide-binding proteins (G proteins) and modulates the activity of downstream effectors. HTR4 is coupled to G(s) G alpha proteins and mediates activation of adenylate cyclase activity. The protein is 5-hydroxytryptamine receptor 4 (HTR4) of Sus scrofa (Pig).